A 349-amino-acid chain; its full sequence is tRNA pseudouridine synthase D (349 aa).

Phe26 contacts substrate. Asp79 (nucleophile) is an active-site residue. Asn128 serves as a coordination point for substrate. One can recognise a TRUD domain in the interval 154-303; sequence GVPNYFGSQR…VDAARRAMLV (150 aa). Phe329 is a binding site for substrate.

It belongs to the pseudouridine synthase TruD family.

It catalyses the reaction uridine(13) in tRNA = pseudouridine(13) in tRNA. Its function is as follows. Responsible for synthesis of pseudouridine from uracil-13 in transfer RNAs. This is tRNA pseudouridine synthase D from Erwinia tasmaniensis (strain DSM 17950 / CFBP 7177 / CIP 109463 / NCPPB 4357 / Et1/99).